A 2890-amino-acid chain; its full sequence is Bifunctional DNA-directed RNA polymerase subunit beta-beta' (2890 aa).

Positions 1–1377 (MSKKIPLKNR…DINIFGDDVD (1377 aa)) are DNA-directed RNA polymerase subunit beta. A DNA-directed RNA polymerase subunit beta' region spans residues 1384-2890 (PIVIKEDDRP…LRTLEDGPKF (1507 aa)). Residues Cys1449, Cys1451, Cys1465, and Cys1468 each contribute to the Zn(2+) site. Residues Asp1849, Asp1851, and Asp1853 each contribute to the Mg(2+) site. Zn(2+)-binding residues include Cys2179, Cys2253, Cys2260, and Cys2263.

This sequence in the N-terminal section; belongs to the RNA polymerase beta chain family. It in the C-terminal section; belongs to the RNA polymerase beta' chain family. As to quaternary structure, the RNAP catalytic core consists of 2 alpha, 1 beta/beta' and 1 omega subunit. When a sigma factor is associated with the core the holoenzyme is formed, which can initiate transcription. The cofactor is Mg(2+). Requires Zn(2+) as cofactor.

The catalysed reaction is RNA(n) + a ribonucleoside 5'-triphosphate = RNA(n+1) + diphosphate. Its function is as follows. DNA-dependent RNA polymerase catalyzes the transcription of DNA into RNA using the four ribonucleoside triphosphates as substrates. This chain is Bifunctional DNA-directed RNA polymerase subunit beta-beta' (rpoBC), found in Helicobacter pylori (strain HPAG1).